The sequence spans 157 residues: MNFPDTPVCEMPFFRGDLRDSNHCAFSKSTCIYLLFEPLRYSCIRLIVMFICVAMITCPNSLRFSQYTFLRSYLTLPSCAYFDFLGTHTSRLKLTPVHIPILVLQRKNNRAYPSDMIYDTCTLDFLFRNLCLHKSCSYVWGQIQSSRRFYRKIDHLA.

A helical membrane pass occupies residues 42–64 (SCIRLIVMFICVAMITCPNSLRF).

The protein resides in the membrane. This is an uncharacterized protein from Saccharomyces cerevisiae (strain ATCC 204508 / S288c) (Baker's yeast).